We begin with the raw amino-acid sequence, 289 residues long: Nucleotide-binding protein MS1718 (289 aa).

8–15 (GRSGAGKS) provides a ligand contact to ATP. 56–59 (DIRN) serves as a coordination point for GTP.

The protein belongs to the RapZ-like family.

In terms of biological role, displays ATPase and GTPase activities. In Mannheimia succiniciproducens (strain KCTC 0769BP / MBEL55E), this protein is Nucleotide-binding protein MS1718.